Consider the following 377-residue polypeptide: Phospho-N-acetylmuramoyl-pentapeptide-transferase (377 aa).

A run of 11 helical transmembrane segments spans residues 9 to 29, 62 to 82, 85 to 105, 122 to 142, 155 to 175, 178 to 198, 210 to 230, 247 to 267, 274 to 294, 299 to 319, and 354 to 374; these read YITLRAVLACATALLIGLVAG, MGGALILIAIAISTLLWADWI, FVWVVLLVTFGFGWIGWMDDY, FFWQATIGLVAAVYLAFAVSA, WVGSGFTMPLPTRADLIVPFF, VSYPLGVLGFVALTWAVIVGT, GLAIMPTVMVGSALGIFAYVV, AAELMVLCAAIGGAGLAFLWF, VFMGDVGALALGGALGTIAVI, IVLFIMGGVFVVETLSVMVQV, and QVVVRFWIITMMLVLVGLSTL.

It belongs to the glycosyltransferase 4 family. MraY subfamily. Requires Mg(2+) as cofactor.

The protein resides in the cell inner membrane. The catalysed reaction is UDP-N-acetyl-alpha-D-muramoyl-L-alanyl-gamma-D-glutamyl-meso-2,6-diaminopimeloyl-D-alanyl-D-alanine + di-trans,octa-cis-undecaprenyl phosphate = di-trans,octa-cis-undecaprenyl diphospho-N-acetyl-alpha-D-muramoyl-L-alanyl-D-glutamyl-meso-2,6-diaminopimeloyl-D-alanyl-D-alanine + UMP. Its pathway is cell wall biogenesis; peptidoglycan biosynthesis. Functionally, catalyzes the initial step of the lipid cycle reactions in the biosynthesis of the cell wall peptidoglycan: transfers peptidoglycan precursor phospho-MurNAc-pentapeptide from UDP-MurNAc-pentapeptide onto the lipid carrier undecaprenyl phosphate, yielding undecaprenyl-pyrophosphoryl-MurNAc-pentapeptide, known as lipid I. This is Phospho-N-acetylmuramoyl-pentapeptide-transferase from Bordetella parapertussis (strain 12822 / ATCC BAA-587 / NCTC 13253).